Reading from the N-terminus, the 20-residue chain is Unknown protein NF009 from 2D-PAGE (20 aa).

The disordered stretch occupies residues 1–20; that stretch reads ATSAAQGAALDESVRKVLKP.

The chain is Unknown protein NF009 from 2D-PAGE from Naegleria fowleri (Brain eating amoeba).